The sequence spans 219 residues: MASVTDGKTGIKDASDQNFDYMFKLLIIGNSSVGKTSFLFRYADDTFTPAFVSTVGIDFKVKTVYRHEKRVKLQIWDTAGQERYRTITTAYYRGAMGFILMYDITNEESFNAVQDWATQIKTYSWDNAQVILVGNKCDMEEERVVPTEKGRLLAEQLGFDFFEASAKENISVRQAFERLVDAICDKMSDSMDTDPSVLGASKTTRLSDTPPLLQQNCSC.

Residue alanine 2 is modified to N-acetylalanine. Residues serine 31, serine 32, valine 33, glycine 34, lysine 35, threonine 36, serine 37, proline 49, and serine 53 each contribute to the GTP site. Threonine 36 provides a ligand contact to Mg(2+). Positions 45–58 (DTFTPAFVSTVGID) match the Switch 1 motif. Residues threonine 54 and aspartate 77 each coordinate Mg(2+). The Switch 2 motif lies at 78 to 96 (TAGQERYRTITTAYYRGAM). Glycine 80 lines the GTP pocket. Threonine 86 bears the Phosphothreonine; by LRRK2 mark. Positions 135, 136, 138, 166, and 167 each coordinate GTP. Serine 188 and serine 190 each carry phosphoserine. Residues cysteine 217 and cysteine 219 are each lipidated (S-geranylgeranyl cysteine). Residue cysteine 219 is modified to Cysteine methyl ester.

It belongs to the small GTPase superfamily. Rab family. As to quaternary structure, interacts with RIMS1, RIMS2, RPH3A and RPH3AL. The GTP-bound form interacts with GAS8/DRC4 (via coiled-coil domains). Interacts with GDI2, CHM and CHML; phosphorylation at Thr-86 disrupts these interactions. Interacts with MADD (via uDENN domain); the GTP-bound form is preferred for interaction. It depends on Mg(2+) as a cofactor. Post-translationally, phosphorylation of Thr-86 in the switch II region by LRRK2 prevents the association of RAB regulatory proteins, including CHM, CHML and RAB GDP dissociation inhibitor GDI2. Abundantly expressed in testis, lung and brain.

It is found in the cell membrane. The protein localises to the golgi apparatus. The enzyme catalyses GTP + H2O = GDP + phosphate + H(+). Its activity is regulated as follows. Regulated by guanine nucleotide exchange factors (GEFs) which promote the exchange of bound GDP for free GTP. Regulated by GTPase activating proteins (GAPs) which increase the GTP hydrolysis activity. Inhibited by GDP dissociation inhibitors (GDIs) which prevent Rab-GDP dissociation. Functionally, the small GTPases Rab are key regulators of intracellular membrane trafficking, from the formation of transport vesicles to their fusion with membranes. Rabs cycle between an inactive GDP-bound form and an active GTP-bound form that is able to recruit to membranes different sets of downstream effectors directly responsible for vesicle formation, movement, tethering and fusion. This Mus musculus (Mouse) protein is Ras-related protein Rab-3B.